The following is an 885-amino-acid chain: Leucine--tRNA ligase (885 aa).

Positions 53 to 63 (PYPSGKLHMGH) match the 'HIGH' region motif. The short motif at 631 to 635 (KMSKS) is the 'KMSKS' region element. K634 is an ATP binding site.

This sequence belongs to the class-I aminoacyl-tRNA synthetase family.

It localises to the cytoplasm. It catalyses the reaction tRNA(Leu) + L-leucine + ATP = L-leucyl-tRNA(Leu) + AMP + diphosphate. The polypeptide is Leucine--tRNA ligase (Psychrobacter sp. (strain PRwf-1)).